The chain runs to 498 residues: MRINPTASGPGVSTLEKKNLGRIAQIIGPVLDVAFPPGKMPNIYNALVVKGRDTVGQQINVTCEVQQLLGNNRVRAVAMSATDGLTRGMEVIDTGAPLSVPVGGATLGRIFNVLGEPVDNLGPVDTRTTSPIHKSAPAFIQLDTKFSIFETGIKVVDLLAPYRRGGKIGLFGGAGVGKTVLIMELINNIAKAHGGVSVFGGVGERTREGNDLYMEMKESGVINEQNLAESKVALVYGQMNEPPGARMRVGLTALTMAEYFRDVNEQDVLLFIDNIFRFVQAGSEVSALLGRMPSAVGYQPTLSTEMGSLQERITSTKEGSITSIQAVYVPADDLTDPAPATTFAHLDATTVLSRGLAAKGIYPAVDPLDSTSTMLQPRIVGEEHYETAQRVKQTLQRYKELQDIIAILGLDELSEEDRLTVARARKIERFLSQPFFVAEVFTGSPGKYVGLAETIRGFKLILSGELDGLPEQAFYLVGNIDEATAKATQLEMESKLKK.

172–179 provides a ligand contact to ATP; the sequence is GGAGVGKT.

Belongs to the ATPase alpha/beta chains family. In terms of assembly, F-type ATPases have 2 components, CF(1) - the catalytic core - and CF(0) - the membrane proton channel. CF(1) has five subunits: alpha(3), beta(3), gamma(1), delta(1), epsilon(1). CF(0) has four main subunits: a(1), b(1), b'(1) and c(9-12).

It localises to the plastid. It is found in the chloroplast thylakoid membrane. It catalyses the reaction ATP + H2O + 4 H(+)(in) = ADP + phosphate + 5 H(+)(out). Produces ATP from ADP in the presence of a proton gradient across the membrane. The catalytic sites are hosted primarily by the beta subunits. The chain is ATP synthase subunit beta, chloroplastic from Carica papaya (Papaya).